A 247-amino-acid chain; its full sequence is Vacuolar iron transporter 1 (247 aa).

The Cytoplasmic segment spans residues 1–33 (MVIAGVSPPTPSSENLLQEHEEKHFTATDVVRD). Residues 34-54 (VIIGVSDGLTVPFALAAGLSG) form a helical membrane-spanning segment. The Vacuolar segment spans residues 55 to 60 (ANVPSS). A helical membrane pass occupies residues 61-81 (LILTAGIAEVAAGAISMGLGG). At 82 to 167 (YLAAKSEEDH…PRRALESAMT (86 aa)) the chain is on the cytoplasmic side. Glu-99, Glu-102, Glu-110, Glu-113, Met-146, and Glu-150 together coordinate Fe cation. Residues 168–188 (IALAYVVGGLVPLSPYFFIPF) form a helical membrane-spanning segment. Over 189 to 191 (AKQ) the chain is Vacuolar. Residues 192–212 (AMITSIAVTLLALVVFGYIKG) traverse the membrane as a helical segment. Over 213–219 (RFTGSNP) the chain is Cytoplasmic. Residues 220 to 240 (VLSSIQTAIIGALASAAAYAM) form a helical membrane-spanning segment. Topologically, residues 241–247 (AKAVQSV) are vacuolar.

Belongs to the CCC1 family. In terms of tissue distribution, expressed at high levels in the blue epidermal cells of the inner bottom part of the petal (at protein level). No detectable expression in parenchyma and epidermis of the purple segments of the petal, parenchyma of the blue segments, leaf, stem, bulb and root (at protein level). High levels of mRNA in the blue epidermal cells of the inner bottom part of the petal. Low-levels of mRNA in the purple segments of the petal, stem, leaf, root, bulb and pistil.

It localises to the vacuole membrane. It carries out the reaction Fe(2+)(in) = Fe(2+)(out). Its function is as follows. Vacuolar iron transporter involved in the transfer of iron ions from the cytosol to the vacuole for intracellular iron storage. Plays an essential role in the development of blue coloration in tulip petals most likely due to the accumulation of ferrous ions that can form complexes with anthocyanins. The protein is Vacuolar iron transporter 1 of Tulipa gesneriana (Garden tulip).